The following is a 429-amino-acid chain: Probable M18 family aminopeptidase 2 (429 aa).

Zn(2+)-binding residues include His-82, His-156, and His-401.

Belongs to the peptidase M18 family. Zn(2+) is required as a cofactor.

In Pseudomonas putida (strain ATCC 700007 / DSM 6899 / JCM 31910 / BCRC 17059 / LMG 24140 / F1), this protein is Probable M18 family aminopeptidase 2.